The chain runs to 332 residues: Ketol-acid reductoisomerase (NADP(+)) (332 aa).

Positions 2 to 182 (AKVYIDKDAS…GATRAGVIET (181 aa)) constitute a KARI N-terminal Rossmann domain. Residues 25-28 (YGSQ), S53, and 83-86 (DMVQ) each bind NADP(+). H108 is a catalytic residue. NADP(+) is bound at residue G134. Positions 183-328 (TFKEETETDL…RQIREISLRG (146 aa)) constitute a KARI C-terminal knotted domain. Mg(2+)-binding residues include D191, E195, E227, and E231. Residue S252 participates in substrate binding.

It belongs to the ketol-acid reductoisomerase family. Mg(2+) serves as cofactor.

It carries out the reaction (2R)-2,3-dihydroxy-3-methylbutanoate + NADP(+) = (2S)-2-acetolactate + NADPH + H(+). The catalysed reaction is (2R,3R)-2,3-dihydroxy-3-methylpentanoate + NADP(+) = (S)-2-ethyl-2-hydroxy-3-oxobutanoate + NADPH + H(+). It participates in amino-acid biosynthesis; L-isoleucine biosynthesis; L-isoleucine from 2-oxobutanoate: step 2/4. It functions in the pathway amino-acid biosynthesis; L-valine biosynthesis; L-valine from pyruvate: step 2/4. Involved in the biosynthesis of branched-chain amino acids (BCAA). Catalyzes an alkyl-migration followed by a ketol-acid reduction of (S)-2-acetolactate (S2AL) to yield (R)-2,3-dihydroxy-isovalerate. In the isomerase reaction, S2AL is rearranged via a Mg-dependent methyl migration to produce 3-hydroxy-3-methyl-2-ketobutyrate (HMKB). In the reductase reaction, this 2-ketoacid undergoes a metal-dependent reduction by NADPH to yield (R)-2,3-dihydroxy-isovalerate. The polypeptide is Ketol-acid reductoisomerase (NADP(+)) (Sulfurisphaera tokodaii (strain DSM 16993 / JCM 10545 / NBRC 100140 / 7) (Sulfolobus tokodaii)).